Consider the following 182-residue polypeptide: Ribosome maturation factor RimM (182 aa).

In terms of domain architecture, PRC barrel spans 102-182 (EEGDYYWKDL…TIEVDWDPGF (81 aa)).

Belongs to the RimM family. In terms of assembly, binds ribosomal protein uS19.

It is found in the cytoplasm. In terms of biological role, an accessory protein needed during the final step in the assembly of 30S ribosomal subunit, possibly for assembly of the head region. Essential for efficient processing of 16S rRNA. May be needed both before and after RbfA during the maturation of 16S rRNA. It has affinity for free ribosomal 30S subunits but not for 70S ribosomes. The protein is Ribosome maturation factor RimM of Klebsiella pneumoniae (strain 342).